Reading from the N-terminus, the 87-residue chain is Toxin Cll4 (87 aa).

An N-terminal signal peptide occupies residues 1–19 (MNSLLMITACLALIGTVWA). Residues 20–85 (KEGYIVNYHD…VWPLPKKRCN (66 aa)) enclose the LCN-type CS-alpha/beta domain. 4 cysteine pairs are disulfide-bonded: Cys-31–Cys-84, Cys-35–Cys-60, Cys-44–Cys-65, and Cys-48–Cys-67. An Asparagine amide modification is found at Asn-85.

This sequence belongs to the long (4 C-C) scorpion toxin superfamily. Sodium channel inhibitor family. Beta subfamily. In terms of tissue distribution, expressed by the venom gland.

The protein resides in the secreted. In terms of biological role, beta toxins bind voltage-independently at site-4 of sodium channels (Nav) and shift the voltage of activation toward more negative potentials thereby affecting sodium channel activation and promoting spontaneous and repetitive firing. The protein is Toxin Cll4 of Centruroides limpidus (Mexican scorpion).